Reading from the N-terminus, the 476-residue chain is Serine/threonine-protein kinase PknF (476 aa).

A phosphothreonine; by autocatalysis mark is found at threonine 8 and threonine 13. The Protein kinase domain occupies 12–279 (FTIVRQLGSG…FARALGHRLG (268 aa)). ATP-binding positions include 18 to 26 (LGSGGMGEV) and lysine 41. The Proton acceptor role is filled by aspartate 137. Threonine 173, threonine 175, and threonine 287 each carry phosphothreonine; by autocatalysis. Serine 290 is modified (phosphoserine; by autocatalysis). The tract at residues 332–376 (ADDERAAQPARTRTTTSAGTTTSVAPASTTRPAPTTPTTTGAADT) is disordered. Positions 338–376 (AQPARTRTTTSAGTTTSVAPASTTRPAPTTPTTTGAADT) are enriched in low complexity.

Belongs to the protein kinase superfamily. Ser/Thr protein kinase family. Post-translationally, dephosphorylated by PstP.

It carries out the reaction L-seryl-[protein] + ATP = O-phospho-L-seryl-[protein] + ADP + H(+). The enzyme catalyses L-threonyl-[protein] + ATP = O-phospho-L-threonyl-[protein] + ADP + H(+). This is Serine/threonine-protein kinase PknF (pknF) from Mycobacterium bovis (strain ATCC BAA-935 / AF2122/97).